Here is a 235-residue protein sequence, read N- to C-terminus: tRNA (adenine(37)-N6)-methyltransferase (235 aa).

The TsaA-like domain occupies 6 to 147; that stretch reads FEQIGVIRSP…YLPFAESLPD (142 aa). S-adenosyl-L-methionine is bound by residues 23-25, 64-65, Arg92, and 127-130; these read PRQ, HQ, and VDGT.

The protein belongs to the tRNA methyltransferase O family. Homodimer.

The enzyme catalyses N(6)-L-threonylcarbamoyladenosine(37) in tRNA + S-adenosyl-L-methionine = N(6)-methyl,N(6)-L-threonylcarbamoyladenosine(37) in tRNA + S-adenosyl-L-homocysteine + H(+). In terms of biological role, S-adenosyl-L-methionine-dependent methyltransferase responsible for the addition of the methyl group in the formation of N6-methyl-N6-threonylcarbamoyladenosine at position 37 (m(6)t(6)A37) of the tRNA anticodon loop of tRNA(Thr)(GGU) that read codons starting with adenosine. The methyl group of m(6)t(6)A37 appears to slightly improve the efficiency of the tRNA decoding ability. The protein is tRNA (adenine(37)-N6)-methyltransferase of Escherichia coli (strain K12).